A 244-amino-acid polypeptide reads, in one-letter code: Small ribosomal subunit protein uS3 (244 aa).

Residues 39-110 enclose the KH type-2 domain; that stretch reads IRDYVRKNLS…QIRINVIEVE (72 aa). The interval 215-244 is disordered; it reads EDAAPSNVGQPRRRNQQRRRQQFEDRSNEG. Basic residues predominate over residues 225–234; sequence PRRRNQQRRR. Residues 235–244 show a composition bias toward basic and acidic residues; that stretch reads QQFEDRSNEG.

This sequence belongs to the universal ribosomal protein uS3 family. Part of the 30S ribosomal subunit. Forms a tight complex with proteins S10 and S14.

Functionally, binds the lower part of the 30S subunit head. Binds mRNA in the 70S ribosome, positioning it for translation. This is Small ribosomal subunit protein uS3 from Synechococcus sp. (strain ATCC 27144 / PCC 6301 / SAUG 1402/1) (Anacystis nidulans).